A 90-amino-acid chain; its full sequence is Small ribosomal subunit protein bS16 (90 aa).

It belongs to the bacterial ribosomal protein bS16 family.

The chain is Small ribosomal subunit protein bS16 from Streptococcus pneumoniae serotype 19F (strain G54).